Reading from the N-terminus, the 123-residue chain is Small ribosomal subunit protein uS12 (123 aa).

D89 carries the post-translational modification 3-methylthioaspartic acid.

The protein belongs to the universal ribosomal protein uS12 family. Part of the 30S ribosomal subunit. Contacts proteins S8 and S17. May interact with IF1 in the 30S initiation complex.

Functionally, with S4 and S5 plays an important role in translational accuracy. Interacts with and stabilizes bases of the 16S rRNA that are involved in tRNA selection in the A site and with the mRNA backbone. Located at the interface of the 30S and 50S subunits, it traverses the body of the 30S subunit contacting proteins on the other side and probably holding the rRNA structure together. The combined cluster of proteins S8, S12 and S17 appears to hold together the shoulder and platform of the 30S subunit. This Bartonella tribocorum (strain CIP 105476 / IBS 506) protein is Small ribosomal subunit protein uS12.